Consider the following 957-residue polypeptide: Glycine dehydrogenase (decarboxylating) (957 aa).

Residue Lys708 is modified to N6-(pyridoxal phosphate)lysine.

It belongs to the GcvP family. The glycine cleavage system is composed of four proteins: P, T, L and H. Pyridoxal 5'-phosphate serves as cofactor.

It carries out the reaction N(6)-[(R)-lipoyl]-L-lysyl-[glycine-cleavage complex H protein] + glycine + H(+) = N(6)-[(R)-S(8)-aminomethyldihydrolipoyl]-L-lysyl-[glycine-cleavage complex H protein] + CO2. Its function is as follows. The glycine cleavage system catalyzes the degradation of glycine. The P protein binds the alpha-amino group of glycine through its pyridoxal phosphate cofactor; CO(2) is released and the remaining methylamine moiety is then transferred to the lipoamide cofactor of the H protein. In Salmonella typhimurium (strain LT2 / SGSC1412 / ATCC 700720), this protein is Glycine dehydrogenase (decarboxylating).